The primary structure comprises 394 residues: 1-deoxy-D-xylulose 5-phosphate reductoisomerase (394 aa).

NADPH contacts are provided by T11, G12, S13, I14, G37, N39, and N126. Residue K127 participates in 1-deoxy-D-xylulose 5-phosphate binding. E128 lines the NADPH pocket. D152 contacts Mn(2+). The 1-deoxy-D-xylulose 5-phosphate site is built by S153, E154, S178, and H201. E154 lines the Mn(2+) pocket. Position 207 (G207) interacts with NADPH. S214, N219, K220, and E223 together coordinate 1-deoxy-D-xylulose 5-phosphate. Residue E223 coordinates Mn(2+).

The protein belongs to the DXR family. Mg(2+) is required as a cofactor. Mn(2+) serves as cofactor.

It carries out the reaction 2-C-methyl-D-erythritol 4-phosphate + NADP(+) = 1-deoxy-D-xylulose 5-phosphate + NADPH + H(+). The protein operates within isoprenoid biosynthesis; isopentenyl diphosphate biosynthesis via DXP pathway; isopentenyl diphosphate from 1-deoxy-D-xylulose 5-phosphate: step 1/6. In terms of biological role, catalyzes the NADPH-dependent rearrangement and reduction of 1-deoxy-D-xylulose-5-phosphate (DXP) to 2-C-methyl-D-erythritol 4-phosphate (MEP). The protein is 1-deoxy-D-xylulose 5-phosphate reductoisomerase of Synechocystis sp. (strain ATCC 27184 / PCC 6803 / Kazusa).